The chain runs to 368 residues: UDP-N-acetylglucosamine--N-acetylmuramyl-(pentapeptide) pyrophosphoryl-undecaprenol N-acetylglucosamine transferase (368 aa).

UDP-N-acetyl-alpha-D-glucosamine contacts are provided by residues 14–16 (TGG), Asn125, Arg168, Ser196, and Gln297.

This sequence belongs to the glycosyltransferase 28 family. MurG subfamily.

The protein localises to the cell inner membrane. It catalyses the reaction di-trans,octa-cis-undecaprenyl diphospho-N-acetyl-alpha-D-muramoyl-L-alanyl-D-glutamyl-meso-2,6-diaminopimeloyl-D-alanyl-D-alanine + UDP-N-acetyl-alpha-D-glucosamine = di-trans,octa-cis-undecaprenyl diphospho-[N-acetyl-alpha-D-glucosaminyl-(1-&gt;4)]-N-acetyl-alpha-D-muramoyl-L-alanyl-D-glutamyl-meso-2,6-diaminopimeloyl-D-alanyl-D-alanine + UDP + H(+). It functions in the pathway cell wall biogenesis; peptidoglycan biosynthesis. In terms of biological role, cell wall formation. Catalyzes the transfer of a GlcNAc subunit on undecaprenyl-pyrophosphoryl-MurNAc-pentapeptide (lipid intermediate I) to form undecaprenyl-pyrophosphoryl-MurNAc-(pentapeptide)GlcNAc (lipid intermediate II). The chain is UDP-N-acetylglucosamine--N-acetylmuramyl-(pentapeptide) pyrophosphoryl-undecaprenol N-acetylglucosamine transferase from Nitrobacter winogradskyi (strain ATCC 25391 / DSM 10237 / CIP 104748 / NCIMB 11846 / Nb-255).